The chain runs to 366 residues: Phospho-N-acetylmuramoyl-pentapeptide-transferase (366 aa).

The next 10 helical transmembrane spans lie at 3-23 (QIFI…PVLI), 55-75 (IAIL…GLVF), 80-100 (PGVS…VGFA), 118-138 (AKLI…LQFP), 161-181 (IAVG…NIVI), 197-217 (LASG…FWQF), 235-255 (PLDL…FLWW), 262-282 (IFMG…LSIT), 287-307 (LLMI…VIQV), and 341-361 (FWLL…GEWL).

The protein belongs to the glycosyltransferase 4 family. MraY subfamily. Mg(2+) serves as cofactor.

The protein localises to the cell membrane. It catalyses the reaction UDP-N-acetyl-alpha-D-muramoyl-L-alanyl-gamma-D-glutamyl-meso-2,6-diaminopimeloyl-D-alanyl-D-alanine + di-trans,octa-cis-undecaprenyl phosphate = di-trans,octa-cis-undecaprenyl diphospho-N-acetyl-alpha-D-muramoyl-L-alanyl-D-glutamyl-meso-2,6-diaminopimeloyl-D-alanyl-D-alanine + UMP. Its pathway is cell wall biogenesis; peptidoglycan biosynthesis. Functionally, catalyzes the initial step of the lipid cycle reactions in the biosynthesis of the cell wall peptidoglycan: transfers peptidoglycan precursor phospho-MurNAc-pentapeptide from UDP-MurNAc-pentapeptide onto the lipid carrier undecaprenyl phosphate, yielding undecaprenyl-pyrophosphoryl-MurNAc-pentapeptide, known as lipid I. In Corynebacterium urealyticum (strain ATCC 43042 / DSM 7109), this protein is Phospho-N-acetylmuramoyl-pentapeptide-transferase.